A 62-amino-acid chain; its full sequence is MFRVTSVLLVIVLLNLVVLTNACHMDCSKMTCCSGICCFYCGRPMCPGTRRALLQRLVGHQR.

The N-terminal stretch at Met1–Ala22 is a signal peptide. 4 cysteine pairs are disulfide-bonded: Cys23-Cys33, Cys27-Cys38, Cys32-Cys41, and Cys37-Cys46. Positions Cys23–Thr49 are excised as a propeptide.

It belongs to the conotoxin I2 superfamily. Expressed by the venom duct.

It is found in the secreted. Probable neurotoxin. This is Conotoxin Im11.9 from Conus imperialis (Imperial cone).